The following is a 196-amino-acid chain: Putative adenylate kinase (196 aa).

5 residues coordinate ATP: glycine 10, glycine 12, lysine 13, threonine 14, and serine 15. Residues 30–53 are NMP; sequence YLNDLIKEEHLYSEVDEERDSVIA. An LID region spans residues 118–128; it reads KRGYSEEKINE. ATP is bound at residue arginine 119.

The protein belongs to the adenylate kinase family. AK6 subfamily. Interacts with uS11. Not a structural component of 40S pre-ribosomes, but transiently interacts with them by binding to uS11.

The enzyme catalyses AMP + ATP = 2 ADP. The catalysed reaction is ATP + H2O = ADP + phosphate + H(+). Its function is as follows. Broad-specificity nucleoside monophosphate (NMP) kinase that catalyzes the reversible transfer of the terminal phosphate group between nucleoside triphosphates and monophosphates. Also has ATPase activity. Involved in the late maturation steps of the 30S ribosomal particles, specifically 16S rRNA maturation. While NMP activity is not required for ribosome maturation, ATPase activity is. Associates transiently with small ribosomal subunit protein uS11. ATP hydrolysis breaks the interaction with uS11. May temporarily remove uS11 from the ribosome to enable a conformational change of the ribosomal RNA that is needed for the final maturation step of the small ribosomal subunit. The chain is Putative adenylate kinase from Methanosarcina mazei (strain ATCC BAA-159 / DSM 3647 / Goe1 / Go1 / JCM 11833 / OCM 88) (Methanosarcina frisia).